The chain runs to 597 residues: U3 small nucleolar RNA-associated protein 6 homolog (597 aa).

HAT repeat units lie at residues 121–153, 156–188, 304–335, 488–520, and 524–557; these read ATKTRLSKVFSAMLAIHSNKPALWIMAAKWEME, LSSESARQLFLRALRFHPECPKLYKEYFRMELM, RKEERCCAVYEEAVKTLPTEAMWKCYITFCLE, GGYKKARAVFKSLQESRPFSVDFFRKMIQFEKE, and CNMANIREYYERALREFGSADSDLWMDYMKEELN.

The protein belongs to the UTP6 family. Part of the small subunit (SSU) processome, composed of more than 70 proteins and the RNA chaperone small nucleolar RNA (snoRNA) U3.

The protein resides in the nucleus. It localises to the nucleolus. Part of the small subunit (SSU) processome, first precursor of the small eukaryotic ribosomal subunit. During the assembly of the SSU processome in the nucleolus, many ribosome biogenesis factors, an RNA chaperone and ribosomal proteins associate with the nascent pre-rRNA and work in concert to generate RNA folding, modifications, rearrangements and cleavage as well as targeted degradation of pre-ribosomal RNA by the RNA exosome. Involved in nucleolar processing of pre-18S ribosomal RNA. The sequence is that of U3 small nucleolar RNA-associated protein 6 homolog from Homo sapiens (Human).